Here is a 161-residue protein sequence, read N- to C-terminus: Cyclin-dependent protein kinase inhibitor SMR12 (161 aa).

Positions glutamate 84–asparagine 93 are enriched in acidic residues. The disordered stretch occupies residues glutamate 84–isoleucine 106.

Functionally, probable cyclin-dependent protein kinase (CDK) inhibitor that functions as a repressor of mitosis in the endoreduplication cell cycle. This chain is Cyclin-dependent protein kinase inhibitor SMR12, found in Arabidopsis thaliana (Mouse-ear cress).